Reading from the N-terminus, the 501-residue chain is Cytochrome P450 monooxygenase janQ (501 aa).

A helical transmembrane segment spans residues 1-16 (MVLGLLAFIWLMRAWR). The N-linked (GlcNAc...) asparagine glycan is linked to N132. Residue C439 coordinates heme.

The protein belongs to the cytochrome P450 family. Requires heme as cofactor.

It localises to the membrane. It functions in the pathway secondary metabolite biosynthesis. Functionally, cytochrome P450 monooxygenase; part of the gene cluster that mediates the biosynthesis of the indole diterpenes janthitremanes such as shearinine K or shearinine A. The geranylgeranyl diphosphate (GGPP) synthase janG catalyzes the first step in janthitremane biosynthesis via conversion of farnesyl pyrophosphate and isopentyl pyrophosphate into geranylgeranyl pyrophosphate (GGPP). Condensation of indole-3-glycerol phosphate with GGPP by the prenyl transferase janC then forms 3-geranylgeranylindole (3-GGI). Epoxidation by the FAD-dependent monooxygenase janM leads to a epoxidized-GGI that is substrate of the terpene cyclase janB for cyclization to yield paspaline. Paspaline is subsequently converted to 13-desoxypaspaline by the cytochrome P450 monooxygenase janP, via beta-PC-M6 in a series of alpha-face oxidations. The cytochrome P450 monooxygenase janQ is proposed to carry out sequential beta-face oxidation steps at C-7 and C-13 of 13-desoxypaspaline to form paspalicine and paspalinine respectively. The indole diterpene prenyltransferase janD may then convert paspalinine into shearinine K which is substrate of janO and/or additional enzymes for oxidation and cyclization to generate shearinine A. This Penicillium janthinellum (Penicillium vitale) protein is Cytochrome P450 monooxygenase janQ.